Reading from the N-terminus, the 310-residue chain is Methionyl-tRNA formyltransferase (310 aa).

(6S)-5,6,7,8-tetrahydrofolate is bound at residue 109 to 112; the sequence is SLLP.

The protein belongs to the Fmt family.

It carries out the reaction L-methionyl-tRNA(fMet) + (6R)-10-formyltetrahydrofolate = N-formyl-L-methionyl-tRNA(fMet) + (6S)-5,6,7,8-tetrahydrofolate + H(+). Its function is as follows. Attaches a formyl group to the free amino group of methionyl-tRNA(fMet). The formyl group appears to play a dual role in the initiator identity of N-formylmethionyl-tRNA by promoting its recognition by IF2 and preventing the misappropriation of this tRNA by the elongation apparatus. The sequence is that of Methionyl-tRNA formyltransferase from Pseudomonas putida (strain ATCC 47054 / DSM 6125 / CFBP 8728 / NCIMB 11950 / KT2440).